A 202-amino-acid polypeptide reads, in one-letter code: Adenylyl-sulfate kinase (202 aa).

ATP is bound at residue 35 to 42 (GLSGSGKS). S109 functions as the Phosphoserine intermediate in the catalytic mechanism.

The protein belongs to the APS kinase family.

The catalysed reaction is adenosine 5'-phosphosulfate + ATP = 3'-phosphoadenylyl sulfate + ADP + H(+). Its pathway is sulfur metabolism; hydrogen sulfide biosynthesis; sulfite from sulfate: step 2/3. Functionally, catalyzes the synthesis of activated sulfate. This is Adenylyl-sulfate kinase from Bacteroides fragilis (strain ATCC 25285 / DSM 2151 / CCUG 4856 / JCM 11019 / LMG 10263 / NCTC 9343 / Onslow / VPI 2553 / EN-2).